The chain runs to 353 residues: Photosystem II protein D1 (353 aa).

3 helical membrane-spanning segments follow: residues 29 to 46, 118 to 133, and 142 to 156; these read YVGW…TATI, HFLI…EWEL, and WICV…AATA. His-118 contributes to the chlorophyll a binding site. Residue Tyr-126 participates in pheophytin a binding. The [CaMn4O5] cluster site is built by Asp-170 and Glu-189. Residues 197–218 form a helical membrane-spanning segment; it reads FHMLGVAGVFGGSLFSAMHGSL. His-198 lines the chlorophyll a pocket. A quinone contacts are provided by residues His-215 and 264 to 265; that span reads SF. His-215 is a binding site for Fe cation. His-272 provides a ligand contact to Fe cation. The chain crosses the membrane as a helical span at residues 274–288; that stretch reads FLAAWPVVGIWFTSL. Residues His-332, Glu-333, Asp-342, and Ala-344 each contribute to the [CaMn4O5] cluster site. Positions 345–353 are excised as a propeptide; that stretch reads AVKAPSIIG.

It belongs to the reaction center PufL/M/PsbA/D family. In terms of assembly, PSII is composed of 1 copy each of membrane proteins PsbA, PsbB, PsbC, PsbD, PsbE, PsbF, PsbH, PsbI, PsbJ, PsbK, PsbL, PsbM, PsbT, PsbX, PsbY, PsbZ, Psb30/Ycf12, peripheral proteins PsbO, CyanoQ (PsbQ), PsbU, PsbV and a large number of cofactors. It forms dimeric complexes. Requires The D1/D2 heterodimer binds P680, chlorophylls that are the primary electron donor of PSII, and subsequent electron acceptors. It shares a non-heme iron and each subunit binds pheophytin, quinone, additional chlorophylls, carotenoids and lipids. D1 provides most of the ligands for the Mn4-Ca-O5 cluster of the oxygen-evolving complex (OEC). There is also a Cl(-1) ion associated with D1 and D2, which is required for oxygen evolution. The PSII complex binds additional chlorophylls, carotenoids and specific lipids. as cofactor. Tyr-161 forms a radical intermediate that is referred to as redox-active TyrZ, YZ or Y-Z. In terms of processing, C-terminally processed by CtpA; processing is essential to allow assembly of the oxygen-evolving complex and thus photosynthetic growth.

It is found in the cellular thylakoid membrane. The catalysed reaction is 2 a plastoquinone + 4 hnu + 2 H2O = 2 a plastoquinol + O2. Its function is as follows. Photosystem II (PSII) is a light-driven water:plastoquinone oxidoreductase that uses light energy to abstract electrons from H(2)O, generating O(2) and a proton gradient subsequently used for ATP formation. It consists of a core antenna complex that captures photons, and an electron transfer chain that converts photonic excitation into a charge separation. The D1/D2 (PsbA/PsbD) reaction center heterodimer binds P680, the primary electron donor of PSII as well as several subsequent electron acceptors. The polypeptide is Photosystem II protein D1 (Prochlorothrix hollandica).